The chain runs to 183 residues: Protein Syd (183 aa).

It belongs to the Syd family.

It is found in the cell inner membrane. Interacts with the SecY protein in vivo. May bind preferentially to an uncomplexed state of SecY, thus functioning either as a chelating agent for excess SecY in the cell or as a regulatory factor that negatively controls the translocase function. The protein is Protein Syd of Idiomarina loihiensis (strain ATCC BAA-735 / DSM 15497 / L2-TR).